The primary structure comprises 221 residues: Chalcone--flavanone isomerase (221 aa).

Substrate-binding residues include threonine 50, asparagine 115, and threonine 192.

Belongs to the chalcone isomerase family.

It carries out the reaction a chalcone = a flavanone.. It participates in secondary metabolite biosynthesis; flavonoid biosynthesis. Catalyzes the intramolecular cyclization of bicyclic chalcones into tricyclic (S)-flavanones. Responsible for the isomerization of 4,2',4',6'-tetrahydroxychalcone (also termed chalcone) into naringenin. The sequence is that of Chalcone--flavanone isomerase (CHI) from Phaseolus vulgaris (Kidney bean).